Consider the following 447-residue polypeptide: N-succinylarginine dihydrolase (447 aa).

Substrate-binding positions include 19 to 28 (AGLSFGNEAS), asparagine 110, and 137 to 138 (HR). The active site involves glutamate 174. A substrate-binding site is contributed by arginine 212. Residue histidine 248 is part of the active site. Substrate is bound by residues aspartate 250 and asparagine 359. Cysteine 365 acts as the Nucleophile in catalysis.

Belongs to the succinylarginine dihydrolase family. In terms of assembly, homodimer.

The catalysed reaction is N(2)-succinyl-L-arginine + 2 H2O + 2 H(+) = N(2)-succinyl-L-ornithine + 2 NH4(+) + CO2. It functions in the pathway amino-acid degradation; L-arginine degradation via AST pathway; L-glutamate and succinate from L-arginine: step 2/5. Catalyzes the hydrolysis of N(2)-succinylarginine into N(2)-succinylornithine, ammonia and CO(2). The chain is N-succinylarginine dihydrolase from Salmonella paratyphi B (strain ATCC BAA-1250 / SPB7).